Here is a 632-residue protein sequence, read N- to C-terminus: 2-hydroxyacyl-CoA lyase 2 (632 aa).

The chain crosses the membrane as a helical span at residues 13–33; it reads LFPSFLLLACGTLVAALLGAA. Thiamine diphosphate is bound at residue Glu-98. Residues 470–550 are thiamine pyrophosphate binding; that stretch reads DFVGTAAHLV…VMALVGNDAG (81 aa). Residues Asp-521 and Asn-547 each contribute to the Mg(2+) site.

This sequence belongs to the TPP enzyme family. It depends on Mg(2+) as a cofactor. Thiamine diphosphate serves as cofactor. In terms of tissue distribution, expressed in all tissues tested, with highest expression in heart, pancreas and placenta.

The protein localises to the endoplasmic reticulum membrane. The enzyme catalyses 2-hydroxyoctadecanoyl-CoA = heptadecanal + formyl-CoA. The catalysed reaction is (2R)-hydroxyhexadecanoyl-CoA = pentadecanal + formyl-CoA. Endoplasmic reticulum 2-OH acyl-CoA lyase involved in the cleavage (C1 removal) reaction in the fatty acid alpha-oxydation in a thiamine pyrophosphate (TPP)-dependent manner. Involved in the phytosphingosine degradation pathway. This is 2-hydroxyacyl-CoA lyase 2 from Homo sapiens (Human).